Here is a 152-residue protein sequence, read N- to C-terminus: Ribosome maturation factor RimP (152 aa).

The protein belongs to the RimP family.

It is found in the cytoplasm. Its function is as follows. Required for maturation of 30S ribosomal subunits. The chain is Ribosome maturation factor RimP from Paraburkholderia xenovorans (strain LB400).